A 490-amino-acid polypeptide reads, in one-letter code: MDPFVVLVLSLSFLLLLYLWRPSPGRGKLPPGPTPLPIFGNFLQIDMKDIRQSISNFSKTYGPVFTLYFGSQPTVVLHGYEAVKEALIDYGEEFSGRGRMPVFEKATKGLGISFSRGNVWRATRHFTVNTLRSLGMGKRTIEIKVQEEAEWLVMELKKTKGSPCDPKFIIGCAPCNVICSIIFQNRFDYKDKDFLSLIENVNEYIKIVSTPAFQVFNAFPILLDYCPGNHKTHSKHFAAIKSYLLKKIKEHEESLDVSNPRDFIDYFLIQRCQENGNQQMNYTQEHLAILVTNLFIGGTETSSLTLRFALLLLMKYPHITDKVQEEIGQVIGRHRSPCMLDRIHMPYTNAMIHEVQRYIDLAPNGLLHEVTCDTKFRDYFIPKGTAVLTSLTSVLHARKEFPNPEMFDPGHFLDENGNFKKSDYFMPFSAGKRKCVGEGLASMELFLFLTTILQNFKLKSLSDPKDIDINSIRSEFSSIPPTFQLCFIPV.

Cysteine 435 is a heme binding site.

The protein belongs to the cytochrome P450 family. It depends on heme as a cofactor.

The protein resides in the endoplasmic reticulum membrane. It localises to the microsome membrane. The enzyme catalyses an organic molecule + reduced [NADPH--hemoprotein reductase] + O2 = an alcohol + oxidized [NADPH--hemoprotein reductase] + H2O + H(+). Its function is as follows. This P450 is active in 15-beta-hydroxylation of steroid sulfates. The sequence is that of Cytochrome P450 2C12, female-specific (Cyp2c12) from Rattus norvegicus (Rat).